The following is a 125-amino-acid chain: Small ribosomal subunit protein uS12c (125 aa).

This sequence belongs to the universal ribosomal protein uS12 family. As to quaternary structure, part of the 30S ribosomal subunit.

Its subcellular location is the plastid. With S4 and S5 plays an important role in translational accuracy. Located at the interface of the 30S and 50S subunits. The protein is Small ribosomal subunit protein uS12c (rps12) of Euglena longa (Euglenophycean alga).